A 1652-amino-acid polypeptide reads, in one-letter code: Maestro heat-like repeat-containing protein family member 1 (1652 aa).

HEAT repeat units follow at residues 3–41, 260–300, 344–382, 385–423, 1369–1407, 1410–1448, and 1616–1652; these read ETYA…SKPA, EEQL…VGSR, CCSP…AAAA, EVKK…HGYL, LMLL…GSPD, QTHS…LMDL, and QVDL…VKFA.

This sequence belongs to the MROH1 family. In terms of assembly, homooligomer; homooligomerizes at lysosome scission sites.

The protein localises to the lysosome membrane. Functionally, lysosome fission factor. Recruited to lysosomes by RAB7 (RAB7A or RAB7B) at scission sites and homooligomerizes to mediate the constriction and scission of lysosomal tubules. May sever membranes by inserting amphipathic helices into one bilayer leaflet. Lysosome fission is required to maintain their steady-state number, shape, size, composition and function, and to accomplish regeneration. This is Maestro heat-like repeat-containing protein family member 1 (MROH1) from Bos taurus (Bovine).